A 183-amino-acid polypeptide reads, in one-letter code: Capsid protein (183 aa).

Residues 136-183 are disordered; it reads NAPILSTLPETTVVRRRGRSPRRRTPSPRRRRSQSPRRRRSKSRESQC. Residues 149 to 177 show a composition bias toward basic residues; sequence VRRRGRSPRRRTPSPRRRRSQSPRRRRSK. Residues Ser-155, Ser-162, and Ser-170 each carry the phosphoserine; by host modification. The stretch at 155-160 is one 1; half-length repeat; it reads SPRRRT. A 3 X 7 AA repeats of S-P-R-R-R-[PR]-S region spans residues 155–176; it reads SPRRRTPSPRRRRSQSPRRRRS. The Bipartite nuclear localization signal motif lies at 158 to 175; sequence RRTPSPRRRRSQSPRRRR. 2 consecutive repeat copies span residues 162 to 168 and 170 to 176. The tract at residues 177-183 is RNA binding; the sequence is KSRESQC.

This sequence belongs to the orthohepadnavirus core antigen family. As to quaternary structure, homodimerizes, then multimerizes. Interacts with cytosol exposed regions of viral L glycoprotein present in the reticulum-to-Golgi compartment. Interacts with human FLNB. Phosphorylated form interacts with host importin alpha; this interaction depends on the exposure of the NLS, which itself depends upon genome maturation and/or phosphorylation of the capsid protein. Interacts with host NUP153. Phosphorylated by host SRPK1, SRPK2, and maybe protein kinase C or GAPDH. Phosphorylation is critical for pregenomic RNA packaging. Protein kinase C phosphorylation is stimulated by HBx protein and may play a role in transport of the viral genome to the nucleus at the late step during the viral replication cycle.

It localises to the virion. The protein resides in the host cytoplasm. Self assembles to form an icosahedral capsid. Most capsids appear to be large particles with an icosahedral symmetry of T=4 and consist of 240 copies of capsid protein, though a fraction forms smaller T=3 particles consisting of 180 capsid proteins. Entering capsids are transported along microtubules to the nucleus. Phosphorylation of the capsid is thought to induce exposure of nuclear localization signal in the C-terminal portion of the capsid protein that allows binding to the nuclear pore complex via the importin (karyopherin-) alpha and beta. Capsids are imported in intact form through the nuclear pore into the nuclear basket, where it probably binds NUP153. Only capsids that contain the mature viral genome can release the viral DNA and capsid protein into the nucleoplasm. Immature capsids get stuck in the basket. Capsids encapsulate the pre-genomic RNA and the P protein. Pre-genomic RNA is reverse-transcribed into DNA while the capsid is still in the cytoplasm. The capsid can then either be directed to the nucleus, providing more genomes for transcription, or bud through the endoplasmic reticulum to provide new virions. The chain is Capsid protein from Hepatitis B virus genotype C subtype ar (isolate Japan/S-207/1988) (HBV-C).